The following is a 355-amino-acid chain: Glucose-1-phosphate thymidylyltransferase (355 aa).

Positions 107 and 220 each coordinate Mg(2+).

This sequence belongs to the glucose-1-phosphate thymidylyltransferase family. Mg(2+) is required as a cofactor.

It catalyses the reaction dTTP + alpha-D-glucose 1-phosphate + H(+) = dTDP-alpha-D-glucose + diphosphate. Its pathway is antibiotic biosynthesis; streptomycin biosynthesis. Involved in the biosynthesis of the streptose moiety of streptomycin. Catalyzes the formation of dTDP-glucose, from dTTP and glucose 1-phosphate, as well as its pyrophosphorolysis. In Streptomyces griseus, this protein is Glucose-1-phosphate thymidylyltransferase (strD).